Consider the following 173-residue polypeptide: Acireductone dioxygenase (173 aa).

The interval 1 to 20 (MKVYEYDNSTEDQREDHDSG) is disordered. Fe(2+) contacts are provided by H81, H83, E87, and H126. The Ni(2+) site is built by H81, H83, E87, and H126.

The protein belongs to the acireductone dioxygenase (ARD) family. Fe(2+) is required as a cofactor. Requires Ni(2+) as cofactor.

The protein localises to the cytoplasm. It is found in the nucleus. The catalysed reaction is 1,2-dihydroxy-5-(methylsulfanyl)pent-1-en-3-one + O2 = 4-methylsulfanyl-2-oxobutanoate + formate + 2 H(+). It catalyses the reaction 1,2-dihydroxy-5-(methylsulfanyl)pent-1-en-3-one + O2 = 3-(methylsulfanyl)propanoate + CO + formate + 2 H(+). It participates in amino-acid biosynthesis; L-methionine biosynthesis via salvage pathway; L-methionine from S-methyl-5-thio-alpha-D-ribose 1-phosphate: step 5/6. Its function is as follows. Catalyzes 2 different reactions between oxygen and the acireductone 1,2-dihydroxy-3-keto-5-methylthiopentene (DHK-MTPene) depending upon the metal bound in the active site. Fe-containing acireductone dioxygenase (Fe-ARD) produces formate and 2-keto-4-methylthiobutyrate (KMTB), the alpha-ketoacid precursor of methionine in the methionine recycle pathway. Ni-containing acireductone dioxygenase (Ni-ARD) produces methylthiopropionate, carbon monoxide and formate, and does not lie on the methionine recycle pathway. This Tuber melanosporum (strain Mel28) (Perigord black truffle) protein is Acireductone dioxygenase.